A 523-amino-acid polypeptide reads, in one-letter code: UDP-glucuronosyltransferase 3A1 (523 aa).

A signal peptide spans 1-22; that stretch reads MVGQRVLLLVAFLLSGVLLSEA. Over 23–483 the chain is Extracellular; sequence AKILTISTLG…YAFQQPWHEQ (461 aa). Residue Asn-52 is glycosylated (N-linked (GlcNAc...) asparagine). Residues 484 to 504 traverse the membrane as a helical segment; sequence YLIDVFVFLLGLTLGTMWLCG. Topologically, residues 505 to 523 are cytoplasmic; it reads KLLGVVARWLRGARKVKKT.

It belongs to the UDP-glycosyltransferase family.

Its subcellular location is the membrane. It catalyses the reaction glucuronate acceptor + UDP-alpha-D-glucuronate = acceptor beta-D-glucuronoside + UDP + H(+). Functionally, UDP-glucuronosyltransferases catalyze phase II biotransformation reactions in which lipophilic substrates are conjugated with glucuronic acid to increase water solubility and enhance excretion. They are of major importance in the conjugation and subsequent elimination of potentially toxic xenobiotics and endogenous compounds. The chain is UDP-glucuronosyltransferase 3A1 (UGT3A1) from Homo sapiens (Human).